We begin with the raw amino-acid sequence, 617 residues long: MSKHKPRHFQKNKFDNRAKTSAKQQFRQVKTGVKDGVFVYKGPLTVSEFCLKTNIPTANIIKHFFLNGVPLTLNSVLSTEQLADACVNFGFDFKVETEITHDNIISNIKFDDDPTQLSPRPPIVTIMGHVDHGKTSLLDAIRQTNTAAKEFGGITQKIGAYQVKNQEGKTITFIDTPGHEAFTGMRARGAQVTDIVVLVVAGDDGLKQQTEEAISHAKSAKTPIIVFINKMDKPTANPDMVIQQLNKFDLVPEEWGGDTIFVKGSALTKEGIQELLDSILLVAEVEDYKANFNAHSSGYAIEVQTTKGLGPTATIIVKRGTLKIGDIVVLGPAWGKVRTMQDENGVHLQEAMPSKPVQISGFDIVPVAGEKFIVFDDEKDAKLIANKFREQQKQKLNTTQINEELKQKIKSKEIKVLNLIFKVDSDGSLAAIKQAMQSIDVPGMSVNIIHSGVGLISENDIMLAKASGALLFSLNLGLSQVVKNIASLQGVKVDVHYHIPKLAEEIENILKGQLEPVYEDVELGRAEVLQLWYHSKVGHIAGTLVKTGKVKRGALCKLLRRNETIYEGRVDSLKSEKNPVNQMEAGKNCGIVINGCEDIQVCDIILVYEKQEVKSKS.

Residues 1-11 (MSKHKPRHFQK) are compositionally biased toward basic residues. Positions 1–25 (MSKHKPRHFQKNKFDNRAKTSAKQQ) are disordered. The 170-residue stretch at 119–288 (PRPPIVTIMG…ILLVAEVEDY (170 aa)) folds into the tr-type G domain. The segment at 128 to 135 (GHVDHGKT) is G1. GTP is bound at residue 128–135 (GHVDHGKT). Residues 153–157 (GITQK) are G2. The tract at residues 175–178 (DTPG) is G3. GTP is bound by residues 175 to 179 (DTPGH) and 229 to 232 (NKMD). Residues 229–232 (NKMD) form a G4 region. The interval 265-267 (SAL) is G5.

This sequence belongs to the TRAFAC class translation factor GTPase superfamily. Classic translation factor GTPase family. IF-2 subfamily.

It is found in the cytoplasm. In terms of biological role, one of the essential components for the initiation of protein synthesis. Protects formylmethionyl-tRNA from spontaneous hydrolysis and promotes its binding to the 30S ribosomal subunits. Also involved in the hydrolysis of GTP during the formation of the 70S ribosomal complex. This Mycoplasma pneumoniae (strain ATCC 29342 / M129 / Subtype 1) (Mycoplasmoides pneumoniae) protein is Translation initiation factor IF-2 (infB).